A 264-amino-acid polypeptide reads, in one-letter code: Thymidylate synthase (264 aa).

Residue arginine 21 coordinates dUMP. Histidine 51 contributes to the (6R)-5,10-methylene-5,6,7,8-tetrahydrofolate binding site. 126–127 lines the dUMP pocket; that stretch reads RR. Cysteine 146 functions as the Nucleophile in the catalytic mechanism. Residues 166 to 169, asparagine 177, and 207 to 209 contribute to the dUMP site; these read RSGD and HIY. Aspartate 169 serves as a coordination point for (6R)-5,10-methylene-5,6,7,8-tetrahydrofolate. Residue alanine 263 participates in (6R)-5,10-methylene-5,6,7,8-tetrahydrofolate binding.

Belongs to the thymidylate synthase family. Bacterial-type ThyA subfamily. Homodimer.

Its subcellular location is the cytoplasm. The catalysed reaction is dUMP + (6R)-5,10-methylene-5,6,7,8-tetrahydrofolate = 7,8-dihydrofolate + dTMP. It participates in pyrimidine metabolism; dTTP biosynthesis. Its function is as follows. Catalyzes the reductive methylation of 2'-deoxyuridine-5'-monophosphate (dUMP) to 2'-deoxythymidine-5'-monophosphate (dTMP) while utilizing 5,10-methylenetetrahydrofolate (mTHF) as the methyl donor and reductant in the reaction, yielding dihydrofolate (DHF) as a by-product. This enzymatic reaction provides an intracellular de novo source of dTMP, an essential precursor for DNA biosynthesis. This chain is Thymidylate synthase, found in Sinorhizobium medicae (strain WSM419) (Ensifer medicae).